The sequence spans 383 residues: Acetylornithine deacetylase (383 aa).

Position 80 (H80) interacts with Zn(2+). D82 is a catalytic residue. Residue D112 coordinates Zn(2+). E144 is an active-site residue. Zn(2+) is bound by residues E145, E169, and H355.

The protein belongs to the peptidase M20A family. ArgE subfamily. As to quaternary structure, homodimer. It depends on Zn(2+) as a cofactor. The cofactor is Co(2+). Glutathione serves as cofactor.

It localises to the cytoplasm. It catalyses the reaction N(2)-acetyl-L-ornithine + H2O = L-ornithine + acetate. It participates in amino-acid biosynthesis; L-arginine biosynthesis; L-ornithine from N(2)-acetyl-L-ornithine (linear): step 1/1. Functionally, catalyzes the hydrolysis of the amide bond of N(2)-acetylated L-amino acids. Cleaves the acetyl group from N-acetyl-L-ornithine to form L-ornithine, an intermediate in L-arginine biosynthesis pathway, and a branchpoint in the synthesis of polyamines. The chain is Acetylornithine deacetylase from Salmonella agona (strain SL483).